The sequence spans 482 residues: Serine carboxypeptidase-like 26 (482 aa).

Positions 1 to 28 (MAVAAAAAARRRDVSCLLLLLCFSSSMA) are cleaved as a signal peptide. 3 cysteine pairs are disulfide-bonded: cysteine 101–cysteine 366, cysteine 263–cysteine 274, and cysteine 298–cysteine 333. Asparagine 152 carries an N-linked (GlcNAc...) asparagine glycan. Residue serine 194 is part of the active site. 4 N-linked (GlcNAc...) asparagine glycosylation sites follow: asparagine 269, asparagine 301, asparagine 354, and asparagine 375. Catalysis depends on residues aspartate 403 and histidine 455.

The protein belongs to the peptidase S10 family.

The protein resides in the secreted. Its function is as follows. Acts as a positive regulator of grain size by controlling grain width, filling and weight. High expression of GS5 in the grain is correlated with large grain size. The polypeptide is Serine carboxypeptidase-like 26 (Oryza sativa subsp. japonica (Rice)).